Consider the following 326-residue polypeptide: Phenylserine dehydratase (326 aa).

As to quaternary structure, monomer. The cofactor is pyridoxal 5'-phosphate.

It carries out the reaction L-threo-3-phenylserine = 3-phenylpyruvate + NH4(+). With respect to regulation, inhibited by phenylhydrazine, hydroxylamine, p-chloromercuribenzoate, and HgCl(2). The sequence is that of Phenylserine dehydratase from Ralstonia pickettii (Burkholderia pickettii).